A 151-amino-acid chain; its full sequence is Ribonuclease H (151 aa).

The RNase H type-1 domain maps to 1–143; sequence MSDVVVIHTD…ADVLATRGLQ (143 aa). Residues D10, E49, D71, and D135 each coordinate Mg(2+).

This sequence belongs to the RNase H family. As to quaternary structure, monomer. It depends on Mg(2+) as a cofactor.

It is found in the cytoplasm. It catalyses the reaction Endonucleolytic cleavage to 5'-phosphomonoester.. Its function is as follows. Endonuclease that specifically degrades the RNA of RNA-DNA hybrids. The protein is Ribonuclease H of Mycolicibacterium gilvum (strain PYR-GCK) (Mycobacterium gilvum (strain PYR-GCK)).